The sequence spans 275 residues: Ribosomal RNA small subunit methyltransferase A (275 aa).

S-adenosyl-L-methionine-binding residues include Asn19, Leu21, Gly46, Glu71, Asp94, and Asn117.

Belongs to the class I-like SAM-binding methyltransferase superfamily. rRNA adenine N(6)-methyltransferase family. RsmA subfamily.

The protein resides in the cytoplasm. It carries out the reaction adenosine(1518)/adenosine(1519) in 16S rRNA + 4 S-adenosyl-L-methionine = N(6)-dimethyladenosine(1518)/N(6)-dimethyladenosine(1519) in 16S rRNA + 4 S-adenosyl-L-homocysteine + 4 H(+). Specifically dimethylates two adjacent adenosines (A1518 and A1519) in the loop of a conserved hairpin near the 3'-end of 16S rRNA in the 30S particle. May play a critical role in biogenesis of 30S subunits. The sequence is that of Ribosomal RNA small subunit methyltransferase A from Burkholderia multivorans (strain ATCC 17616 / 249).